A 196-amino-acid chain; its full sequence is Holliday junction branch migration complex subunit RuvA (196 aa).

The tract at residues 1–63 (MINKIYGKIV…DDDVKLFGFL (63 aa)) is domain I. The segment at 64–142 (NISEREVFED…KGDESSSYML (79 aa)) is domain II. Lysine 143 is a region of interest (flexible linker). Positions 143 to 196 (KFKELEQSIVNMGFDRKLVVVAFREIMLSDKFLILKEAEQEQFLFTETLKRLSV) are domain III.

The protein belongs to the RuvA family. In terms of assembly, homotetramer. Forms an RuvA(8)-RuvB(12)-Holliday junction (HJ) complex. HJ DNA is sandwiched between 2 RuvA tetramers; dsDNA enters through RuvA and exits via RuvB. An RuvB hexamer assembles on each DNA strand where it exits the tetramer. Each RuvB hexamer is contacted by two RuvA subunits (via domain III) on 2 adjacent RuvB subunits; this complex drives branch migration. In the full resolvosome a probable DNA-RuvA(4)-RuvB(12)-RuvC(2) complex forms which resolves the HJ.

The protein resides in the cytoplasm. In terms of biological role, the RuvA-RuvB-RuvC complex processes Holliday junction (HJ) DNA during genetic recombination and DNA repair, while the RuvA-RuvB complex plays an important role in the rescue of blocked DNA replication forks via replication fork reversal (RFR). RuvA specifically binds to HJ cruciform DNA, conferring on it an open structure. The RuvB hexamer acts as an ATP-dependent pump, pulling dsDNA into and through the RuvAB complex. HJ branch migration allows RuvC to scan DNA until it finds its consensus sequence, where it cleaves and resolves the cruciform DNA. The sequence is that of Holliday junction branch migration complex subunit RuvA from Borrelia duttonii (strain Ly).